We begin with the raw amino-acid sequence, 590 residues long: Aspartate--tRNA ligase (590 aa).

Residue E172 participates in L-aspartate binding. The interval 196–199 (QLFK) is aspartate. Residue R218 coordinates L-aspartate. Residues 218 to 220 (RDE) and Q227 each bind ATP. H449 contacts L-aspartate. Residue E483 coordinates ATP. R490 contacts L-aspartate. 535–538 (GLDR) lines the ATP pocket.

The protein belongs to the class-II aminoacyl-tRNA synthetase family. Type 1 subfamily. Homodimer.

The protein localises to the cytoplasm. It carries out the reaction tRNA(Asp) + L-aspartate + ATP = L-aspartyl-tRNA(Asp) + AMP + diphosphate. Catalyzes the attachment of L-aspartate to tRNA(Asp) in a two-step reaction: L-aspartate is first activated by ATP to form Asp-AMP and then transferred to the acceptor end of tRNA(Asp). The polypeptide is Aspartate--tRNA ligase (Mannheimia succiniciproducens (strain KCTC 0769BP / MBEL55E)).